Consider the following 230-residue polypeptide: Ribose-5-phosphate isomerase A (230 aa).

Substrate is bound by residues 28–31 (TGST), 83–86 (DGAD), and 97–100 (KGLG). Glu106 acts as the Proton acceptor in catalysis. Position 124 (Lys124) interacts with substrate.

The protein belongs to the ribose 5-phosphate isomerase family. As to quaternary structure, homodimer.

The catalysed reaction is aldehydo-D-ribose 5-phosphate = D-ribulose 5-phosphate. Its pathway is carbohydrate degradation; pentose phosphate pathway; D-ribose 5-phosphate from D-ribulose 5-phosphate (non-oxidative stage): step 1/1. Catalyzes the reversible conversion of ribose-5-phosphate to ribulose 5-phosphate. This Gloeobacter violaceus (strain ATCC 29082 / PCC 7421) protein is Ribose-5-phosphate isomerase A.